The sequence spans 75 residues: ATP synthase subunit c (75 aa).

Transmembrane regions (helical) follow at residues 13–33 (LSVI…GILF) and 55–75 (FIGL…ALII).

The protein belongs to the ATPase C chain family. In terms of assembly, F-type ATPases have 2 components, F(1) - the catalytic core - and F(0) - the membrane proton channel. F(1) has five subunits: alpha(3), beta(3), gamma(1), delta(1), epsilon(1). F(0) has three main subunits: a(1), b(2) and c(10-14). The alpha and beta chains form an alternating ring which encloses part of the gamma chain. F(1) is attached to F(0) by a central stalk formed by the gamma and epsilon chains, while a peripheral stalk is formed by the delta and b chains.

It localises to the cell membrane. Functionally, f(1)F(0) ATP synthase produces ATP from ADP in the presence of a proton or sodium gradient. F-type ATPases consist of two structural domains, F(1) containing the extramembraneous catalytic core and F(0) containing the membrane proton channel, linked together by a central stalk and a peripheral stalk. During catalysis, ATP synthesis in the catalytic domain of F(1) is coupled via a rotary mechanism of the central stalk subunits to proton translocation. Its function is as follows. Key component of the F(0) channel; it plays a direct role in translocation across the membrane. A homomeric c-ring of between 10-14 subunits forms the central stalk rotor element with the F(1) delta and epsilon subunits. The sequence is that of ATP synthase subunit c from Bifidobacterium longum (strain DJO10A).